A 618-amino-acid polypeptide reads, in one-letter code: Probable Xaa-Pro aminopeptidase P (618 aa).

The Mn(2+) site is built by Asp-414, Asp-425, Glu-523, and Glu-537.

The protein belongs to the peptidase M24B family. The cofactor is Mn(2+).

The catalysed reaction is Release of any N-terminal amino acid, including proline, that is linked to proline, even from a dipeptide or tripeptide.. Functionally, catalyzes the removal of a penultimate prolyl residue from the N-termini of peptides. This chain is Probable Xaa-Pro aminopeptidase P (AMPP), found in Metarhizium acridum (strain CQMa 102).